Here is a 139-residue protein sequence, read N- to C-terminus: Small ribosomal subunit protein uS12 (139 aa).

Positions 119 to 139 are disordered; that stretch reads GVDKRRQQRSAYGAKKPKPKS.

This sequence belongs to the universal ribosomal protein uS12 family. As to quaternary structure, part of the 30S ribosomal subunit. Contacts proteins S8 and S17. May interact with IF1 in the 30S initiation complex.

In terms of biological role, with S4 and S5 plays an important role in translational accuracy. Interacts with and stabilizes bases of the 16S rRNA that are involved in tRNA selection in the A site and with the mRNA backbone. Located at the interface of the 30S and 50S subunits, it traverses the body of the 30S subunit contacting proteins on the other side and probably holding the rRNA structure together. The combined cluster of proteins S8, S12 and S17 appears to hold together the shoulder and platform of the 30S subunit. This is Small ribosomal subunit protein uS12 from Mycoplasma genitalium (strain ATCC 33530 / DSM 19775 / NCTC 10195 / G37) (Mycoplasmoides genitalium).